A 141-amino-acid polypeptide reads, in one-letter code: Bombinins BLP-7/H-BO (141 aa).

Positions 1–18 (MNFKYIIAVSFLIASTYA) are cleaved as a signal peptide. The propeptide occupies 19–43 (RSVKNDEQSLSQRDVLDEESLREIR). At asparagine 70 the chain carries Asparagine amide. The propeptide occupies 74 to 123 (TAEEHEVMKRLEAVMRDLDSLDHPEEASEKETRGFNQEEIANLFTKKEKR). Leucine 140 carries the post-translational modification Leucine amide.

The protein belongs to the bombinin family. Expressed by the skin glands.

It is found in the secreted. Its function is as follows. Antimicrobial peptide with activity against Gram-positive and -negative bacteria and fungi. Shows activity against P.acnes (MIC=5 uM), E.coli (MIC=5-6.3 uM), S.aureus (MIC=5-6.3 uM), M.luteus, S.cerevisiae and C.albicans (MIC=10-12.5 uM). Also reduces the production of interleukin (IL)-8 and granulocyte-macrophage colony stimulating factor (CSF2) in normal human epidermal keratinocytes (NHEKs). Shows anticancer activity against three human hepatoma cell lines. In vivo, using the rat ear edema model, suppress P.acnes-induced skin inflammation, significantly reducing the ear thickness. Shows weak hemolytic activity against human erythrocytes. Functionally, shows weak antimicrobial activity (tested on E.coli, S.aureus and C.albicans). Shows high hemolytic activity against human erythrocytes (38% erythrocyte lysis at 80.0 uM, and up to 85% at 159.7 uM). This is Bombinins BLP-7/H-BO from Bombina orientalis (Oriental fire-bellied toad).